Consider the following 366-residue polypeptide: D-alanine--D-alanine ligase (366 aa).

In terms of domain architecture, ATP-grasp spans 148–357 (KMTFEQAGLA…FPELVDRLIQ (210 aa)). 184-239 (EAALGYPAFVKPANLGSSVGIAKVRSRQELEAALDNAASYDRRLVVEAGVVAREVE) contributes to the ATP binding site. 3 residues coordinate Mg(2+): D310, E324, and N326.

The protein belongs to the D-alanine--D-alanine ligase family. It depends on Mg(2+) as a cofactor. The cofactor is Mn(2+).

The protein resides in the cytoplasm. It catalyses the reaction 2 D-alanine + ATP = D-alanyl-D-alanine + ADP + phosphate + H(+). It functions in the pathway cell wall biogenesis; peptidoglycan biosynthesis. Functionally, cell wall formation. This is D-alanine--D-alanine ligase from Nostoc punctiforme (strain ATCC 29133 / PCC 73102).